We begin with the raw amino-acid sequence, 685 residues long: Diphthine--ammonia ligase (685 aa).

It in the C-terminal section; belongs to the RutC family. This sequence in the N-terminal section; belongs to the Diphthine--ammonia ligase family. In terms of assembly, interacts with elongation factor 2 (eEF-2; EFT1 or EFT2).

It localises to the cytoplasm. The catalysed reaction is diphthine-[translation elongation factor 2] + NH4(+) + ATP = diphthamide-[translation elongation factor 2] + AMP + diphosphate + H(+). The protein operates within protein modification; peptidyl-diphthamide biosynthesis. Its function is as follows. Amidase that catalyzes the last step of diphthamide biosynthesis using ammonium and ATP. Diphthamide biosynthesis consists in the conversion of an L-histidine residue in the translation elongation factor eEF-2 (EFT1 or EFT2) to diphthamide. In Saccharomyces cerevisiae (strain ATCC 204508 / S288c) (Baker's yeast), this protein is Diphthine--ammonia ligase (DPH6).